A 501-amino-acid polypeptide reads, in one-letter code: Probable Xaa-Pro aminopeptidase pepP (501 aa).

Residues M1 to R25 form a disordered region. The span at S12–R25 shows a compositional bias: polar residues. Positions 298, 309, 432, and 472 each coordinate Mn(2+).

It belongs to the peptidase M24B family. Mn(2+) serves as cofactor.

It carries out the reaction Release of any N-terminal amino acid, including proline, that is linked to proline, even from a dipeptide or tripeptide.. Its function is as follows. Catalyzes the removal of a penultimate prolyl residue from the N-termini of peptides. The chain is Probable Xaa-Pro aminopeptidase pepP (pepP) from Metarhizium acridum (strain CQMa 102).